The chain runs to 195 residues: Endoribonuclease YbeY (195 aa).

Positions 152, 156, and 162 each coordinate Zn(2+).

This sequence belongs to the endoribonuclease YbeY family. Zn(2+) serves as cofactor.

The protein resides in the cytoplasm. Its function is as follows. Single strand-specific metallo-endoribonuclease involved in late-stage 70S ribosome quality control and in maturation of the 3' terminus of the 16S rRNA. The sequence is that of Endoribonuclease YbeY from Rhodopseudomonas palustris (strain HaA2).